A 169-amino-acid polypeptide reads, in one-letter code: Small ribosomal subunit protein uS5 (169 aa).

One can recognise an S5 DRBM domain in the interval 14–77 (LDDQVVAINR…AAAEKNLITV (64 aa)).

The protein belongs to the universal ribosomal protein uS5 family. Part of the 30S ribosomal subunit. Contacts proteins S4 and S8.

Functionally, with S4 and S12 plays an important role in translational accuracy. Its function is as follows. Located at the back of the 30S subunit body where it stabilizes the conformation of the head with respect to the body. This chain is Small ribosomal subunit protein uS5, found in Limosilactobacillus reuteri (strain DSM 20016) (Lactobacillus reuteri).